A 228-amino-acid chain; its full sequence is Isoprenyl transferase (228 aa).

Asp15 is a catalytic residue. Asp15 is a binding site for Mg(2+). Substrate contacts are provided by residues 16–19, Trp20, Arg28, His32, and 60–62; these read GNGR and STE. Asn63 (proton acceptor) is an active-site residue. Substrate is bound by residues Trp64, Arg66, Arg176, and 182–184; that span reads RLS. Glu195 is a Mg(2+) binding site.

It belongs to the UPP synthase family. Homodimer. It depends on Mg(2+) as a cofactor.

Its function is as follows. Catalyzes the condensation of isopentenyl diphosphate (IPP) with allylic pyrophosphates generating different type of terpenoids. The sequence is that of Isoprenyl transferase from Wolinella succinogenes (strain ATCC 29543 / DSM 1740 / CCUG 13145 / JCM 31913 / LMG 7466 / NCTC 11488 / FDC 602W) (Vibrio succinogenes).